The primary structure comprises 310 residues: Glycerol-3-phosphate dehydrogenase [NAD(P)+] (310 aa).

Positions 19, 39, 40, and 87 each coordinate NADPH. Sn-glycerol 3-phosphate is bound by residues Lys87 and Gly115. NADPH is bound at residue Ser119. Sn-glycerol 3-phosphate is bound by residues Lys170, Asp223, Ser233, Arg234, and Asn235. Catalysis depends on Lys170, which acts as the Proton acceptor. NADPH is bound at residue Arg234. Glu260 provides a ligand contact to NADPH.

It belongs to the NAD-dependent glycerol-3-phosphate dehydrogenase family.

Its subcellular location is the cytoplasm. The catalysed reaction is sn-glycerol 3-phosphate + NAD(+) = dihydroxyacetone phosphate + NADH + H(+). It carries out the reaction sn-glycerol 3-phosphate + NADP(+) = dihydroxyacetone phosphate + NADPH + H(+). Its pathway is membrane lipid metabolism; glycerophospholipid metabolism. Catalyzes the reduction of the glycolytic intermediate dihydroxyacetone phosphate (DHAP) to sn-glycerol 3-phosphate (G3P), the key precursor for phospholipid synthesis. This chain is Glycerol-3-phosphate dehydrogenase [NAD(P)+], found in Synechococcus sp. (strain JA-3-3Ab) (Cyanobacteria bacterium Yellowstone A-Prime).